Reading from the N-terminus, the 333-residue chain is Terpene synthase 2 (333 aa).

The short motif at 82–87 (DDDLDT) is the DDxx(x)D/E motif element. The NDxxSxxxD/E motif motif lies at 219 to 227 (NDCVSYAKE).

It belongs to the terpene synthase family.

It catalyses the reaction (2E,6E)-farnesyl diphosphate = (E)-beta-farnesene + diphosphate. It carries out the reaction (2E,6E)-farnesyl diphosphate = (1S,2S,4R)-beta-elemene + diphosphate. Functionally, terpene synthase that converts its substrate farnesyl diphosphate (FPP) into the sesquiterpene (E)-beta-farnesene as major product. Is also able to convert FPP into delta-elemene, beta-elemene, (E)-beta-caryophyllene, 9-epi-(E)-caryophyllene, and a yet unidentified sesquiterpene. The polypeptide is Terpene synthase 2 (Dictyostelium purpureum (Slime mold)).